A 231-amino-acid chain; its full sequence is MHFMDGFLPIGWCVFWAVLAAPFLIYGMWKITKMINNDRHVLPLMAVCGAFIFVVSLVDIPSPTGSCSHPTGTGLSASFFGPAVTSVLGLIILVFQALLLGHGGFTTLGATAFSMAVMGPLAAWLVFKGLRKTGRVPLGPAVFCAAVVANCVTYLITSLQIALAYPVEGSVLTAFLAAAAVFAVVQIPISIIEGIISGLVATYIARIKPEILQKLGVISGEEVKKVLSEQA.

The next 6 helical transmembrane spans lie at 6-26 (GFLP…FLIY), 41-61 (VLPL…VDIP), 79-99 (FFGP…QALL), 107-127 (TLGA…WLVF), 136-156 (VPLG…TYLI), and 172-192 (LTAF…ISII).

This sequence belongs to the CbiM family. Forms an energy-coupling factor (ECF) transporter complex composed of an ATP-binding protein (A component, CbiO), a transmembrane protein (T component, CbiQ) and 2 possible substrate-capture proteins (S components, CbiM and CbiN) of unknown stoichimetry.

The protein localises to the cell membrane. Its pathway is cofactor biosynthesis; adenosylcobalamin biosynthesis. Part of the energy-coupling factor (ECF) transporter complex CbiMNOQ involved in cobalt import. This chain is Putative cobalt transport protein CbiM 1, found in Methanocorpusculum labreanum (strain ATCC 43576 / DSM 4855 / Z).